Consider the following 1019-residue polypeptide: Clotting factor C (1019 aa).

The N-terminal stretch at 1-25 is a signal peptide; sequence MVLASFLVSGLVLGILAQQMRPVQS. The EGF-like domain maps to 102 to 137; it reads YGTWCSGECQCKNGGICDQRTGACTCRDRYEGAHCE. Intrachain disulfides connect Cys-110–Cys-118, Cys-112–Cys-125, Cys-127–Cys-136, Cys-142–Cys-182, Cys-168–Cys-195, Cys-199–Cys-241, Cys-227–Cys-254, Cys-260–Cys-308, Cys-294–Cys-321, Cys-331–Cys-350, Cys-354–Cys-374, Cys-464–Cys-564, Cys-538–Cys-556, Cys-576–Cys-621, Cys-607–Cys-634, and Cys-720–Cys-748. 3 consecutive Sushi domains span residues 140–197, 198–256, and 258–323; these read KGCP…KCIR, ECAK…QCKK, and VFCP…SCVK. The LCCL domain maps to 325 to 421; that stretch reads ADREVDCDSK…EELKSLARSF (97 aa). The C-type lectin domain maps to 436–568; the sequence is CPDGWFEVEE…PSSFACMMDL (133 aa). N-linked (GlcNAc...) asparagine glycans are attached at residues Asn-523 and Asn-534. Sushi domains lie at 574–636 and 689–750; these read AKCD…RCIK and PRSS…SCIP. N-linked (GlcNAc...) asparagine glycans are attached at residues Asn-624, Asn-740, and Asn-767. Residues 763-1019 form the Peptidase S1 domain; it reads IWNGNSTEIG…VFLSWIRQFI (257 aa). A disulfide bridge connects residues Cys-794 and Cys-810. Active-site charge relay system residues include His-809 and Asp-865. Asn-912 carries an N-linked (GlcNAc...) asparagine glycan. Cys-932 and Cys-951 are joined by a disulfide. Asp-960 is a binding site for substrate. Cys-962 and Cys-996 are joined by a disulfide. The active-site Charge relay system is Ser-966.

This sequence belongs to the peptidase S1 family. As to quaternary structure, heterodimer of a light chain and a heavy chain linked by a disulfide bond. Forms a covalent heterodimer with intracellular coagulation inhibitor 1/LICI-1. Forms a covalent heterodimer with intracellular coagulation inhibitor 2/LICI-2. N-glycosylated. Post-translationally, lipopolysaccharide (LPS) activates clotting factor C by inducing the proteolytic cleavage of the clotting factor C light chain into clotting factor C chains A and B. Clotting factor C chains heavy, A and B remain associated via interchain disulfide bonds. Expressed in hemocytes (at protein level).

The protein resides in the secreted. It catalyses the reaction Selective cleavage of 103-Arg-|-Ser-104 and 124-Ile-|-Ile-125 bonds in Limulus clotting factor B to form activated factor B. Cleavage of -Pro-Arg-|-Xaa- bonds in synthetic substrates.. With respect to regulation, activated by Gram-negative bacterial lipopolysaccharides. Inhibited by intracellular coagulation inhibitor 1/LICI-1 and to a lesser extent by intracellular coagulation inhibitors 2/LICI-2 and 3/LICI-3. Inhibited by the small molecule diisopropyl fluorophosphate (DFP). In terms of biological role, this enzyme is closely associated with an endotoxin-sensitive hemolymph coagulation system which may play important roles in both hemostasis and host defense mechanisms. Its active form catalyzes the activation of clotting factor B. The polypeptide is Clotting factor C (Tachypleus tridentatus (Japanese horseshoe crab)).